The primary structure comprises 830 residues: Formin-like protein 14 (830 aa).

A signal peptide spans 1–34 (MAMAMAMPSSSPPLFFSLLNLMLLLLLLAPYCSA). Residues 40–59 (NNTHHRSSSPTQTTLQQLHS) show a composition bias toward polar residues. Residues 40–195 (NNTHHRSSSP…NISTLVHPTQ (156 aa)) are disordered. Pro residues-rich tracts occupy residues 61–86 (DSPPPPPLPTPTVTTPTPPPPPPAPR) and 95–135 (PPPP…PTPK). Residues 149-160 (YPFTNYPFFPNF) are compositionally biased toward low complexity. The chain crosses the membrane as a helical span at residues 203–223 (VLQALLLSFLSLCLLLLSALL). The interval 235 to 446 (HHSHSHPNAR…LHSDKLKPGS (212 aa)) is disordered. Positions 314–323 (RPLPPLPRVG) are enriched in pro residues. The span at 324–369 (PPSGEFASRSSASDPSTAPPAAAEASSSSLSPSSPSASSPTLGSSP) shows a compositional bias: low complexity. Residues 390–823 (PKRRPQPPEP…MMGRDWNMAA (434 aa)) enclose the FH2 domain. Over residues 424–446 (HSPSEKSMRKSRPLHSDKLKPGS) the composition is skewed to basic and acidic residues.

This sequence belongs to the formin-like family. Class-I subfamily.

The protein resides in the membrane. This chain is Formin-like protein 14 (FH14), found in Oryza sativa subsp. japonica (Rice).